Consider the following 183-residue polypeptide: UPF0398 protein PEPE_0933 (183 aa).

Belongs to the UPF0398 family.

The protein is UPF0398 protein PEPE_0933 of Pediococcus pentosaceus (strain ATCC 25745 / CCUG 21536 / LMG 10740 / 183-1w).